We begin with the raw amino-acid sequence, 385 residues long: Ribosomal RNA large subunit methyltransferase G (385 aa).

This sequence belongs to the methyltransferase superfamily. RlmG family.

Its subcellular location is the cytoplasm. The enzyme catalyses guanosine(1835) in 23S rRNA + S-adenosyl-L-methionine = N(2)-methylguanosine(1835) in 23S rRNA + S-adenosyl-L-homocysteine + H(+). Its function is as follows. Specifically methylates the guanine in position 1835 (m2G1835) of 23S rRNA. The protein is Ribosomal RNA large subunit methyltransferase G of Vibrio campbellii (strain ATCC BAA-1116).